The chain runs to 338 residues: MKVFYDNDADLALIQKKKVAIIGYGSQGHAHALNLKDSGVSVVVGLRKDSSSWEKAGKAGLEVKEVAAAVAAADVVMILTPDEGQGALYRDEIAPNIRQGAALVFAHGFNIHFGQIHPRADLDCFLVAPKGPGHLVRSTYTQGGGVPSLIAVHQDASGNATNIALSYAKANGGTRAGVIETSFREETETDLFGEQAVLCGGATALVQAGFETLVEAGYAPEMAYFECMHELKLIVDLMYEGGISNMRYSISNTAEYGDLTRGPRVVNADTKAEMKKILTEIQNGQFAREFILENQSGKPTMQAMRRIGAEHPIEVVGSKLRSMMTWIGQSRIVDRSRN.

The KARI N-terminal Rossmann domain maps to 1–181 (MKVFYDNDAD…GGTRAGVIET (181 aa)). NADP(+) is bound by residues 24 to 27 (YGSQ), R47, S50, S52, and 82 to 85 (DEGQ). H107 is an active-site residue. G133 contributes to the NADP(+) binding site. The KARI C-terminal knotted domain maps to 182–327 (SFREETETDL…SKLRSMMTWI (146 aa)). The Mg(2+) site is built by D190, E194, E226, and E230. Residue S251 coordinates substrate.

It belongs to the ketol-acid reductoisomerase family. Mg(2+) serves as cofactor.

It catalyses the reaction (2R)-2,3-dihydroxy-3-methylbutanoate + NADP(+) = (2S)-2-acetolactate + NADPH + H(+). It carries out the reaction (2R,3R)-2,3-dihydroxy-3-methylpentanoate + NADP(+) = (S)-2-ethyl-2-hydroxy-3-oxobutanoate + NADPH + H(+). The protein operates within amino-acid biosynthesis; L-isoleucine biosynthesis; L-isoleucine from 2-oxobutanoate: step 2/4. It functions in the pathway amino-acid biosynthesis; L-valine biosynthesis; L-valine from pyruvate: step 2/4. Its function is as follows. Involved in the biosynthesis of branched-chain amino acids (BCAA). Catalyzes an alkyl-migration followed by a ketol-acid reduction of (S)-2-acetolactate (S2AL) to yield (R)-2,3-dihydroxy-isovalerate. In the isomerase reaction, S2AL is rearranged via a Mg-dependent methyl migration to produce 3-hydroxy-3-methyl-2-ketobutyrate (HMKB). In the reductase reaction, this 2-ketoacid undergoes a metal-dependent reduction by NADPH to yield (R)-2,3-dihydroxy-isovalerate. In Acidithiobacillus ferrooxidans (strain ATCC 23270 / DSM 14882 / CIP 104768 / NCIMB 8455) (Ferrobacillus ferrooxidans (strain ATCC 23270)), this protein is Ketol-acid reductoisomerase (NADP(+)).